Consider the following 478-residue polypeptide: DNA gyrase subunit B (478 aa).

A Toprim domain is found at 319–438 (CELYLVEGDS…GGHVYIAQPP (120 aa)). 3 residues coordinate Mg(2+): Glu325, Asp403, and Asp405.

Belongs to the type II topoisomerase GyrB family. In terms of assembly, heterotetramer, composed of two GyrA and two GyrB chains. In the heterotetramer, GyrA contains the active site tyrosine that forms a transient covalent intermediate with DNA, while GyrB binds cofactors and catalyzes ATP hydrolysis. Mg(2+) is required as a cofactor. The cofactor is Mn(2+). Requires Ca(2+) as cofactor.

The protein resides in the cytoplasm. It carries out the reaction ATP-dependent breakage, passage and rejoining of double-stranded DNA.. A type II topoisomerase that negatively supercoils closed circular double-stranded (ds) DNA in an ATP-dependent manner to modulate DNA topology and maintain chromosomes in an underwound state. Negative supercoiling favors strand separation, and DNA replication, transcription, recombination and repair, all of which involve strand separation. Also able to catalyze the interconversion of other topological isomers of dsDNA rings, including catenanes and knotted rings. Type II topoisomerases break and join 2 DNA strands simultaneously in an ATP-dependent manner. The chain is DNA gyrase subunit B (gyrB) from Cytophaga hutchinsonii.